The primary structure comprises 556 residues: Mitochondrial distribution and morphology protein 34-2 (556 aa).

Positions M1 to L195 constitute an SMP-LTD domain. Disordered stretches follow at residues E206–G239, T299–P423, and H440–P473. Residues T299 to A333 show a composition bias toward polar residues. Residues S334–S357 show a composition bias toward low complexity. Over residues R362 to R374 the composition is skewed to basic residues. Residues V375–D385 show a composition bias toward basic and acidic residues. The segment covering S391–P402 has biased composition (polar residues). Basic and acidic residues predominate over residues E459–D468.

Belongs to the MDM34 family. As to quaternary structure, component of the ER-mitochondria encounter structure (ERMES) or MDM complex, composed of mmm1, mdm10, mdm12 and mdm34.

Its subcellular location is the mitochondrion outer membrane. Component of the ERMES/MDM complex, which serves as a molecular tether to connect the endoplasmic reticulum (ER) and mitochondria. Components of this complex are involved in the control of mitochondrial shape and protein biogenesis, and function in nonvesicular lipid trafficking between the ER and mitochondria. Mdm34 is required for the interaction of the ER-resident membrane protein mmm1 and the outer mitochondrial membrane-resident beta-barrel protein mdm10. In Penicillium rubens (strain ATCC 28089 / DSM 1075 / NRRL 1951 / Wisconsin 54-1255) (Penicillium chrysogenum), this protein is Mitochondrial distribution and morphology protein 34-2.